A 329-amino-acid chain; its full sequence is Aspartate carbamoyltransferase catalytic subunit (329 aa).

Positions 66 and 67 each coordinate carbamoyl phosphate. Lys94 is an L-aspartate binding site. Positions 116, 149, and 152 each coordinate carbamoyl phosphate. The L-aspartate site is built by Arg189 and Arg243. 2 residues coordinate carbamoyl phosphate: Gly284 and Pro285.

It belongs to the aspartate/ornithine carbamoyltransferase superfamily. ATCase family. In terms of assembly, heterododecamer (2C3:3R2) of six catalytic PyrB chains organized as two trimers (C3), and six regulatory PyrI chains organized as three dimers (R2).

It catalyses the reaction carbamoyl phosphate + L-aspartate = N-carbamoyl-L-aspartate + phosphate + H(+). Its pathway is pyrimidine metabolism; UMP biosynthesis via de novo pathway; (S)-dihydroorotate from bicarbonate: step 2/3. Its function is as follows. Catalyzes the condensation of carbamoyl phosphate and aspartate to form carbamoyl aspartate and inorganic phosphate, the committed step in the de novo pyrimidine nucleotide biosynthesis pathway. This is Aspartate carbamoyltransferase catalytic subunit from Gloeobacter violaceus (strain ATCC 29082 / PCC 7421).